Reading from the N-terminus, the 89-residue chain is Cell division protein ZapA (89 aa).

Belongs to the ZapA family. Type 2 subfamily. In terms of assembly, homodimer. Interacts with FtsZ.

It localises to the cytoplasm. In terms of biological role, activator of cell division through the inhibition of FtsZ GTPase activity, therefore promoting FtsZ assembly into bundles of protofilaments necessary for the formation of the division Z ring. It is recruited early at mid-cell but it is not essential for cell division. The sequence is that of Cell division protein ZapA from Bacillus mycoides (strain KBAB4) (Bacillus weihenstephanensis).